The primary structure comprises 380 residues: Cytochrome b (380 aa).

4 helical membrane-spanning segments follow: residues 34–54, 78–99, 114–134, and 179–199; these read FGSL…LLAM, WLIR…FLHI, WNTG…GYVL, and FFAL…IHLT. 2 residues coordinate heme b: H84 and H98. Heme b-binding residues include H183 and H197. H202 is an a ubiquinone binding site. 4 consecutive transmembrane segments (helical) span residues 227-247, 289-309, 321-341, and 348-368; these read FKDI…ALFS, LGGV…PFLH, LSQT…WIGS, and FIII…ILFP.

The protein belongs to the cytochrome b family. The cytochrome bc1 complex contains 11 subunits: 3 respiratory subunits (MT-CYB, CYC1 and UQCRFS1), 2 core proteins (UQCRC1 and UQCRC2) and 6 low-molecular weight proteins (UQCRH/QCR6, UQCRB/QCR7, UQCRQ/QCR8, UQCR10/QCR9, UQCR11/QCR10 and a cleavage product of UQCRFS1). This cytochrome bc1 complex then forms a dimer. It depends on heme b as a cofactor.

It is found in the mitochondrion inner membrane. Functionally, component of the ubiquinol-cytochrome c reductase complex (complex III or cytochrome b-c1 complex) that is part of the mitochondrial respiratory chain. The b-c1 complex mediates electron transfer from ubiquinol to cytochrome c. Contributes to the generation of a proton gradient across the mitochondrial membrane that is then used for ATP synthesis. The chain is Cytochrome b (MT-CYB) from Gallus gallus (Chicken).